The chain runs to 117 residues: Replication initiation control protein YabA (117 aa).

H87, C89, C103, and C106 together coordinate Zn(2+).

The protein belongs to the YabA family. As to quaternary structure, homotetramer. Interacts with both DnaA and DnaN, acting as a bridge between these two proteins. Requires Zn(2+) as cofactor.

It is found in the cytoplasm. It localises to the nucleoid. Involved in control of chromosome replication initiation. Inhibits the cooperative binding of DnaA to the oriC region, thus negatively regulating initiation of chromosome replication. Inhibits the ability of DnaA-ATP to form a helix on DNA; does not disassemble preformed DnaA-DNA helices. Decreases the residence time of DnaA on the chromosome at its binding sites (oriC, replication forks and promoter-binding sites). Tethers DnaA to the replication machinery via the DNA polymerase beta sliding clamp subunit (dnaN). Associates with oriC and other DnaA targets on the chromosome in a DnaA-dependent manner. The protein is Replication initiation control protein YabA of Latilactobacillus sakei subsp. sakei (strain 23K) (Lactobacillus sakei subsp. sakei).